A 1066-amino-acid polypeptide reads, in one-letter code: Carbamoyl phosphate synthase large chain (1066 aa).

The segment at 1–401 (MPKNNNIKKV…ALMKAVRSLE (401 aa)) is carboxyphosphate synthetic domain. 12 residues coordinate ATP: Arg-129, Arg-169, Gly-175, Gly-176, Arg-208, Ile-210, Glu-215, Gly-241, Val-242, His-243, Gln-284, and Glu-298. Residues 133–327 (KNTMEKIGEP…IAKVAAKIAL (195 aa)) enclose the ATP-grasp 1 domain. Mg(2+)-binding residues include Gln-284, Glu-298, and Asn-300. The Mn(2+) site is built by Gln-284, Glu-298, and Asn-300. Positions 402–547 (QNIYSMNYGD…YSCFDSENEV (146 aa)) are oligomerization domain. The segment at 548–931 (DATKTKKKVL…ALYKAFLGAG (384 aa)) is carbamoyl phosphate synthetic domain. The ATP-grasp 2 domain occupies 673–863 (DEILEKCCIP…IVSLASKAVL (191 aa)). Residues Arg-709, Lys-748, Leu-750, Glu-754, Gly-779, Ile-780, His-781, Ser-782, Gln-822, and Glu-834 each contribute to the ATP site. Gln-822, Glu-834, and Asn-836 together coordinate Mg(2+). Positions 822, 834, and 836 each coordinate Mn(2+). Positions 932–1066 (INLPKHKKMI…ELSLIDIARI (135 aa)) constitute an MGS-like domain. The segment at 932-1066 (INLPKHKKMI…ELSLIDIARI (135 aa)) is allosteric domain.

Belongs to the CarB family. Composed of two chains; the small (or glutamine) chain promotes the hydrolysis of glutamine to ammonia, which is used by the large (or ammonia) chain to synthesize carbamoyl phosphate. Tetramer of heterodimers (alpha,beta)4. Mg(2+) is required as a cofactor. Mn(2+) serves as cofactor.

The catalysed reaction is hydrogencarbonate + L-glutamine + 2 ATP + H2O = carbamoyl phosphate + L-glutamate + 2 ADP + phosphate + 2 H(+). The enzyme catalyses hydrogencarbonate + NH4(+) + 2 ATP = carbamoyl phosphate + 2 ADP + phosphate + 2 H(+). Its pathway is amino-acid biosynthesis; L-arginine biosynthesis; carbamoyl phosphate from bicarbonate: step 1/1. It functions in the pathway pyrimidine metabolism; UMP biosynthesis via de novo pathway; (S)-dihydroorotate from bicarbonate: step 1/3. Its function is as follows. Large subunit of the glutamine-dependent carbamoyl phosphate synthetase (CPSase). CPSase catalyzes the formation of carbamoyl phosphate from the ammonia moiety of glutamine, carbonate, and phosphate donated by ATP, constituting the first step of 2 biosynthetic pathways, one leading to arginine and/or urea and the other to pyrimidine nucleotides. The large subunit (synthetase) binds the substrates ammonia (free or transferred from glutamine from the small subunit), hydrogencarbonate and ATP and carries out an ATP-coupled ligase reaction, activating hydrogencarbonate by forming carboxy phosphate which reacts with ammonia to form carbamoyl phosphate. In Lachnoclostridium phytofermentans (strain ATCC 700394 / DSM 18823 / ISDg) (Clostridium phytofermentans), this protein is Carbamoyl phosphate synthase large chain.